Here is a 282-residue protein sequence, read N- to C-terminus: NADPH-dependent 7-cyano-7-deazaguanine reductase (282 aa).

88 to 90 (IES) serves as a coordination point for substrate. Residue 90–91 (SK) coordinates NADPH. Catalysis depends on C190, which acts as the Thioimide intermediate. D197 acts as the Proton donor in catalysis. 229-230 (HE) serves as a coordination point for substrate. 258 to 259 (RG) is an NADPH binding site.

This sequence belongs to the GTP cyclohydrolase I family. QueF type 2 subfamily. Homodimer.

It localises to the cytoplasm. The enzyme catalyses 7-aminomethyl-7-carbaguanine + 2 NADP(+) = 7-cyano-7-deazaguanine + 2 NADPH + 3 H(+). The protein operates within tRNA modification; tRNA-queuosine biosynthesis. In terms of biological role, catalyzes the NADPH-dependent reduction of 7-cyano-7-deazaguanine (preQ0) to 7-aminomethyl-7-deazaguanine (preQ1). The protein is NADPH-dependent 7-cyano-7-deazaguanine reductase of Escherichia coli (strain K12 / MC4100 / BW2952).